Consider the following 151-residue polypeptide: Aspartate carbamoyltransferase regulatory chain (151 aa).

Zn(2+) is bound by residues cysteine 108, cysteine 113, cysteine 138, and cysteine 141.

It belongs to the PyrI family. As to quaternary structure, contains catalytic and regulatory chains. Zn(2+) serves as cofactor.

Involved in allosteric regulation of aspartate carbamoyltransferase. In Pyrobaculum arsenaticum (strain DSM 13514 / JCM 11321 / PZ6), this protein is Aspartate carbamoyltransferase regulatory chain.